Consider the following 247-residue polypeptide: Programmed cell death 1 ligand 2 (247 aa).

A signal peptide spans 1–19 (MLLLLPILNLSLQLHPVAA). Topologically, residues 20-221 (LFTVTAPKEV…RMEPKVPRTW (202 aa)) are extracellular. Positions 21-118 (FTVTAPKEVY…AWDYKYLTVK (98 aa)) constitute an Ig-like V-type domain. 2 disulfide bridges follow: Cys42-Cys102 and Cys143-Cys192. N-linked (GlcNAc...) asparagine glycans are attached at residues Asn64, Asn157, Asn163, and Asn189. An Ig-like C2-type domain is found at 122 to 203 (SYMRIDTRIL…FWNAHMKELT (82 aa)). Residues 222–242 (PLHVFIPACTIALIFLAIVII) traverse the membrane as a helical segment. Residues 243–247 (QRKRI) are Cytoplasmic-facing.

It belongs to the immunoglobulin superfamily. BTN/MOG family. As to quaternary structure, interacts with PDCD1. As to expression, expressed in immature and mature bone marrow-derived dendritic cells and splenic dendritic cells. Highly expressed in placenta, liver and weakly expressed in heart, spleen, lymph nodes and thymus. Also expressed in some tumor cell lines of lymphoid origin.

It localises to the cell membrane. In terms of biological role, involved in the costimulatory signal essential for T-cell proliferation and IFNG production in a PDCD1-independent manner. Interaction with PDCD1 inhibits T-cell proliferation by blocking cell cycle progression and cytokine production. This Mus musculus (Mouse) protein is Programmed cell death 1 ligand 2 (Pdcd1lg2).